Reading from the N-terminus, the 149-residue chain is Large ribosomal subunit protein bL9 (149 aa).

The protein belongs to the bacterial ribosomal protein bL9 family.

In terms of biological role, binds to the 23S rRNA. The protein is Large ribosomal subunit protein bL9 of Helicobacter pylori (strain G27).